A 415-amino-acid chain; its full sequence is MSEDVSKNLSETLFVKHKQAKETSALTQYMPTSKKILDDREQQEDRAWYRHLRRLQWAWQGLSPIEMEGVLSRIASSTHSRTHDDWLDTVMGYHSGNWTFEWIKLGMEHQRRANDLKGEDAADELFTASLCFSIAGYPHLKNDNLALQAQVLANKAYSEGAEKTQYTIKQIEVPYQKRKIIANLHLPRTDKQLPVVMVSAGLDSLQTDMWRLFRNHFAPKDIAMLTVDMPSVGHSSHWPLTEDSSCLHQAVLNELYSIPYVDHHKVGLVGFRFGGNAMVRLSFLEQEKIKACVALGAPVHDLFTSPKKLQKMPKMYLDMLASRLGKSAVDINSMAGQMMAWSLKVQGFLSSRKTKVPILALSLEGDPVSPYSDNQLVALFSHYGQAKKISSKTITKGYEQSLDLAIKWLEDELLR.

This sequence belongs to the FrsA family.

The enzyme catalyses a carboxylic ester + H2O = an alcohol + a carboxylate + H(+). In terms of biological role, catalyzes the hydrolysis of esters. The chain is Esterase FrsA from Vibrio parahaemolyticus serotype O3:K6 (strain RIMD 2210633).